Reading from the N-terminus, the 255-residue chain is Diphthine--ammonia ligase (255 aa).

The protein belongs to the Diphthine--ammonia ligase family.

The enzyme catalyses diphthine-[translation elongation factor 2] + NH4(+) + ATP = diphthamide-[translation elongation factor 2] + AMP + diphosphate + H(+). The protein operates within protein modification; peptidyl-diphthamide biosynthesis. In terms of biological role, amidase that catalyzes the last step of diphthamide biosynthesis using ammonium and ATP. Diphthamide biosynthesis consists in the conversion of an L-histidine residue in the translation elongation factor eEF-2 (EEF2) to diphthamide. The polypeptide is Diphthine--ammonia ligase (dph6) (Danio rerio (Zebrafish)).